The sequence spans 95 residues: Small ribosomal subunit protein bS20 (95 aa).

The tract at residues 1–22 (MANIKSQIKRNRTNENNRLRNK) is disordered. Over residues 12 to 22 (RTNENNRLRNK) the composition is skewed to basic and acidic residues.

It belongs to the bacterial ribosomal protein bS20 family.

Its function is as follows. Binds directly to 16S ribosomal RNA. The protein is Small ribosomal subunit protein bS20 of Tropheryma whipplei (strain TW08/27) (Whipple's bacillus).